The following is a 234-amino-acid chain: MNTKPILALDFPGEKEVFDFLKHFHEPLFVKIGMELYMQEGPDIVRKVKELGHDVFLDLKLHDIPNTVFSAMKGLAKLGVNLVNVHAAGGRPMMEAALEGLEAGTPVGKERPALIAVTQLTSTTEEQMQTEQRIALSLQESVLHYARLTKQAALQGVVCSVHEAKAIAEVCGEDFLRVTPGIRLAGGAAHDQKRIATPDGAKREGSSLIVVGRAVTGAQDPVAAYKIVSELWEA.

Residues aspartate 10, lysine 31, 58 to 67 (DLKLHDIPNT), threonine 121, arginine 183, glutamine 192, glycine 212, and arginine 213 each bind substrate. Lysine 60 (proton donor) is an active-site residue.

This sequence belongs to the OMP decarboxylase family. Type 1 subfamily. Homodimer.

It carries out the reaction orotidine 5'-phosphate + H(+) = UMP + CO2. Its pathway is pyrimidine metabolism; UMP biosynthesis via de novo pathway; UMP from orotate: step 2/2. Its function is as follows. Catalyzes the decarboxylation of orotidine 5'-monophosphate (OMP) to uridine 5'-monophosphate (UMP). The protein is Orotidine 5'-phosphate decarboxylase of Lysinibacillus sphaericus (strain C3-41).